The chain runs to 229 residues: Potassium/proton antiporter CemA (229 aa).

3 helical membrane passes run 6-26, 107-127, and 189-209; these read AFIP…ISLC, ILHF…SFWA, and ILSG…KYWI.

Belongs to the CemA family.

The protein localises to the plastid. Its subcellular location is the chloroplast inner membrane. It carries out the reaction K(+)(in) + H(+)(out) = K(+)(out) + H(+)(in). Contributes to K(+)/H(+) antiport activity by supporting proton efflux to control proton extrusion and homeostasis in chloroplasts in a light-dependent manner to modulate photosynthesis. Prevents excessive induction of non-photochemical quenching (NPQ) under continuous-light conditions. Indirectly promotes efficient inorganic carbon uptake into chloroplasts. In Crucihimalaya wallichii (Rock-cress), this protein is Potassium/proton antiporter CemA.